The following is a 470-amino-acid chain: Alpha-1A adrenergic receptor (470 aa).

Residues 1–27 (MTPSSVTLNCSNCSHVLAPELNTVKAV) are Extracellular-facing. N-linked (GlcNAc...) asparagine glycans are attached at residues N9 and N12. Residues 28-51 (VLGMVLGIFILFGVIGNILVILSV) traverse the membrane as a helical segment. Residues 52 to 64 (VCHRHLQTVTYYF) are Cytoplasmic-facing. Residues 65-88 (IVNLAVADLLLSSTVLPFSAIFEI) traverse the membrane as a helical segment. Residues 89 to 99 (LDRWVFGRVFC) are Extracellular-facing. C99 and C176 are oxidised to a cystine. The chain crosses the membrane as a helical span at residues 100-122 (NIWAAVDVLCCTASIMSLCVISV). Residues 123-143 (DRYIGVSYPLRYPAIMTKRRA) are Cytoplasmic-facing. Residues 144–167 (LLAVMLLWVLSVIISIGPLFGWKE) traverse the membrane as a helical segment. Topologically, residues 168–181 (PAPEDETVCKITEE) are extracellular. The chain crosses the membrane as a helical span at residues 182–205 (PGYAIFSAVGSFYLPLAIILAMYC). At 206–271 (RVYVVAQKES…FSREKKAAKT (66 aa)) the chain is on the cytoplasmic side. A helical membrane pass occupies residues 272-295 (LGIVVGCFVLCWLPFFLVLPIGSI). Topologically, residues 296–303 (FPAYRPSD) are extracellular. Residues 304-327 (TVFKITFWLGYFNSCINPIIYLCS) traverse the membrane as a helical segment. Over 328–470 (NQEFKKAFQS…LSLSEKGESV (143 aa)) the chain is Cytoplasmic. The S-palmitoyl cysteine moiety is linked to residue C343. The tract at residues 375-416 (GAPCRLSPSSSVALSRTPSSRDSREWRVFSGGPINSGPGPTE) is disordered. Positions 381–392 (SPSSSVALSRTP) are enriched in polar residues.

This sequence belongs to the G-protein coupled receptor 1 family. Adrenergic receptor subfamily. ADRA1A sub-subfamily.

Its subcellular location is the cell membrane. Functionally, this alpha-adrenergic receptor mediates its action by association with G proteins that activate a phosphatidylinositol-calcium second messenger system. The protein is Alpha-1A adrenergic receptor (adra1a) of Oryzias latipes (Japanese rice fish).